A 269-amino-acid chain; its full sequence is Tryptophan synthase alpha chain (269 aa).

Catalysis depends on proton acceptor residues Glu49 and Asp60.

It belongs to the TrpA family. As to quaternary structure, tetramer of two alpha and two beta chains.

It carries out the reaction (1S,2R)-1-C-(indol-3-yl)glycerol 3-phosphate + L-serine = D-glyceraldehyde 3-phosphate + L-tryptophan + H2O. It functions in the pathway amino-acid biosynthesis; L-tryptophan biosynthesis; L-tryptophan from chorismate: step 5/5. Functionally, the alpha subunit is responsible for the aldol cleavage of indoleglycerol phosphate to indole and glyceraldehyde 3-phosphate. The polypeptide is Tryptophan synthase alpha chain (Salmonella arizonae (strain ATCC BAA-731 / CDC346-86 / RSK2980)).